The sequence spans 706 residues: Probable E3 ubiquitin ligase complex SCF subunit sconB (706 aa).

Positions 1–12 are enriched in basic and acidic residues; that stretch reads MQSDDRSVREGS. Disordered regions lie at residues 1–43 and 56–76; these read MQSD…LLQQ and TAEEIDTETDSNHRRPHSFGA. Over residues 34–43 the composition is skewed to low complexity; it reads QQQQQQLLQQ. The 47-residue stretch at 203 to 249 folds into the F-box domain; it reads IDFLTALPPEISFKILCYLDTTSLCKAAQVSSRWRALADDDVVWHRM. WD repeat units follow at residues 377–414, 417–456, 458–494, 496–537, 589–632, 635–672, and 675–706; these read GHTNGVMCLQFEDNILATGSYDATIKIWDTETGEELRT, GHQSGIRCLQFDDTKLISGSMDRSLKVWNWRTGECISTYT, HRGGVIGLHFDATILASASVDKTVKIWNFEDKSTFLL, GHTD…RTFH, ATET…CLRT, GHLEGVWALGADTLRIVSGAEDRMVKIWDPRTGKCERT, and GHSGPVTCIGLGDSRFATGSEDCEVRMYSFRN.

The protein belongs to the WD repeat MET30/SCONB/SCON-2 family. In terms of assembly, component of the SCF(sconB) E3 ubiquitin ligase complex.

Its pathway is protein modification; protein ubiquitination. In terms of biological role, component of the SCF(sconB) E3 ubiquitin ligase complex involved in the regulation of sulfur metabolite repression, probably by mediating the inactivation or degradation of the metR transcription factor. This Aspergillus flavus (strain ATCC 200026 / FGSC A1120 / IAM 13836 / NRRL 3357 / JCM 12722 / SRRC 167) protein is Probable E3 ubiquitin ligase complex SCF subunit sconB (sconB).